The sequence spans 87 residues: MSHYSSYYGGLGYGYGSFGGPGCGCNSIRRLVGFGSGYGGFGYGSGFGGFGYGSGYGGYGYGSGFRGYGCGCRRPSCCGGYGFSSFY.

The 23 X 2 AA repeats of G-[YCGS] stretch occupies residues 9 to 82 (GGLGYGYGSF…RRPSCCGGYG (74 aa)).

The protein belongs to the KRTAP type 19 family. As to quaternary structure, interacts with hair keratins. As to expression, strong expression in narrowly defined pattern restricted to the lower and middle cortical regions of the hair shaft in both developing and cycling hair. During hair follicle regression (catagen), expression levels decrease until expression is no longer detectable in follicles at resting stage (telogen).

Its function is as follows. In the hair cortex, hair keratin intermediate filaments are embedded in an interfilamentous matrix, consisting of hair keratin-associated proteins (KRTAP), which are essential for the formation of a rigid and resistant hair shaft through their extensive disulfide bond cross-linking with abundant cysteine residues of hair keratins. The matrix proteins include the high-sulfur and high-glycine-tyrosine keratins. The polypeptide is Keratin-associated protein 19-3 (Krtap19-3) (Mus musculus (Mouse)).